We begin with the raw amino-acid sequence, 1152 residues long: Syntaxin-binding protein 5 (1152 aa).

Residues 14-35 form a disordered region; that stretch reads TAGSSSASQQQQQQQHPPGNRE. Over residues 17 to 28 the composition is skewed to low complexity; that stretch reads SSSASQQQQQQQ. WD repeat units follow at residues 62-95, 102-141, 146-182, 201-235, 241-273, 295-337, 345-379, 401-478, 506-620, and 634-696; these read SALA…CYCQ, VIQL…SLKF, VTFC…GYVI, HISD…DYRY, IHSV…PAKP, PILK…KSTA, IVDF…LIDL, TCCE…YKLK, QIIS…ELVI, and TSLA…SGAG. Disordered regions lie at residues 555–596 and 675–731; these read VDTP…GLRD and SNDP…QKVN. At serine 693 the chain carries Phosphoserine. Residues 713 to 722 are compositionally biased toward low complexity; it reads SPTSGSSSPH. Residues serine 724 and serine 760 each carry the phosphoserine modification. The residue at position 763 (threonine 763) is a Phosphothreonine. Serine 783 carries the phosphoserine modification. Threonine 785 carries the post-translational modification Phosphothreonine. Serine 786 carries the post-translational modification Phosphoserine. WD repeat units lie at residues 795 to 852, 861 to 935, 940 to 984, and 998 to 1021; these read ISAL…SGTI, RMAF…QSCA, ITET…LDVY, and CFAN…TYSQ. Basic and acidic residues predominate over residues 883 to 893; that stretch reads NVAEEKDEKEK. The segment at 883-907 is disordered; it reads NVAEEKDEKEKLKKRRPVSVSPSSS. Serine 901 and serine 903 each carry phosphoserine. Phosphothreonine is present on threonine 1040. Residues serine 1059 and serine 1132 each carry the phosphoserine modification. The v-SNARE coiled-coil homology domain maps to 1087–1147; it reads GIEGVKGAAS…HEMMLKYKDK (61 aa).

It belongs to the WD repeat L(2)GL family. Part of a complex that contains STX1, STXBP5, SNAP25 and SYT1. Interacts with STX1A and STX4A via its v-SNARE homology domain. Part of a complex that contains STXBP5, STX4A and SNAP23. In terms of tissue distribution, detected in heart, spleen, lung, skeletal muscle, liver and kidney (at protein level). Detected in brain, particularly in the olfactory bulb and in hippocampus. Detected in the tenia tecta and in the piriform layer of the brain cortex.

It localises to the cytoplasm. Its subcellular location is the cell membrane. The protein localises to the membrane. Plays a regulatory role in calcium-dependent exocytosis and neurotransmitter release. Inhibits membrane fusion between transport vesicles and the plasma membrane. May modulate the assembly of trans-SNARE complexes between transport vesicles and the plasma membrane. Competes with STXBP1 for STX1 binding. Inhibits translocation of GLUT4 from intracellular vesicles to the plasma membrane. The polypeptide is Syntaxin-binding protein 5 (Stxbp5) (Mus musculus (Mouse)).